We begin with the raw amino-acid sequence, 284 residues long: L-ribulose-5-phosphate 3-epimerase UlaE (284 aa).

Belongs to the L-ribulose-5-phosphate 3-epimerase family.

The enzyme catalyses L-ribulose 5-phosphate = L-xylulose 5-phosphate. It functions in the pathway cofactor degradation; L-ascorbate degradation; D-xylulose 5-phosphate from L-ascorbate: step 3/4. In terms of biological role, catalyzes the isomerization of L-xylulose-5-phosphate to L-ribulose-5-phosphate. Is involved in the anaerobic L-ascorbate utilization. This is L-ribulose-5-phosphate 3-epimerase UlaE from Shigella flexneri serotype 5b (strain 8401).